A 410-amino-acid polypeptide reads, in one-letter code: Peptidase T (410 aa).

Residue His-79 participates in Zn(2+) binding. The active site involves Asp-81. Residue Asp-142 participates in Zn(2+) binding. Glu-176 (proton acceptor) is an active-site residue. Glu-177, Asp-199, and His-381 together coordinate Zn(2+).

Belongs to the peptidase M20B family. Zn(2+) serves as cofactor.

It is found in the cytoplasm. The catalysed reaction is Release of the N-terminal residue from a tripeptide.. Functionally, cleaves the N-terminal amino acid of tripeptides. This Bacillus pumilus (strain SAFR-032) protein is Peptidase T.